The chain runs to 119 residues: Large ribosomal subunit protein bL20 (119 aa).

Belongs to the bacterial ribosomal protein bL20 family.

Binds directly to 23S ribosomal RNA and is necessary for the in vitro assembly process of the 50S ribosomal subunit. It is not involved in the protein synthesizing functions of that subunit. This Ruthia magnifica subsp. Calyptogena magnifica protein is Large ribosomal subunit protein bL20.